The chain runs to 185 residues: Peptidyl-tRNA hydrolase (185 aa).

Y14 is a tRNA binding site. The Proton acceptor role is filled by H19. 3 residues coordinate tRNA: Y65, N67, and N113.

It belongs to the PTH family. Monomer.

The protein resides in the cytoplasm. It catalyses the reaction an N-acyl-L-alpha-aminoacyl-tRNA + H2O = an N-acyl-L-amino acid + a tRNA + H(+). In terms of biological role, hydrolyzes ribosome-free peptidyl-tRNAs (with 1 or more amino acids incorporated), which drop off the ribosome during protein synthesis, or as a result of ribosome stalling. Catalyzes the release of premature peptidyl moieties from peptidyl-tRNA molecules trapped in stalled 50S ribosomal subunits, and thus maintains levels of free tRNAs and 50S ribosomes. This chain is Peptidyl-tRNA hydrolase, found in Rickettsia typhi (strain ATCC VR-144 / Wilmington).